The following is a 446-amino-acid chain: Chromosomal replication initiator protein DnaA (446 aa).

Residues 1 to 73 (MAAQLNELWQ…INSMKIITTK (73 aa)) form a domain I, interacts with DnaA modulators region. Residues 73 to 107 (KKYDIAFLISSEEALETDEDQETDTNNVNTDTSSS) are domain II. The domain III, AAA+ region stretch occupies residues 108–324 (MLNPKYKFDS…GALIRIVAFS (217 aa)). 4 residues coordinate ATP: Gly152, Gly154, Lys155, and Thr156. Positions 325 to 446 (SLTNKEISVD…NEITKRFSPK (122 aa)) are domain IV, binds dsDNA.

The protein belongs to the DnaA family. Oligomerizes as a right-handed, spiral filament on DNA at oriC.

Its subcellular location is the cytoplasm. In terms of biological role, plays an essential role in the initiation and regulation of chromosomal replication. ATP-DnaA binds to the origin of replication (oriC) to initiate formation of the DNA replication initiation complex once per cell cycle. Binds the DnaA box (a 9 base pair repeat at the origin) and separates the double-stranded (ds)DNA. Forms a right-handed helical filament on oriC DNA; dsDNA binds to the exterior of the filament while single-stranded (ss)DNA is stabiized in the filament's interior. The ATP-DnaA-oriC complex binds and stabilizes one strand of the AT-rich DNA unwinding element (DUE), permitting loading of DNA polymerase. After initiation quickly degrades to an ADP-DnaA complex that is not apt for DNA replication. Binds acidic phospholipids. The chain is Chromosomal replication initiator protein DnaA from Clostridium acetobutylicum (strain ATCC 824 / DSM 792 / JCM 1419 / IAM 19013 / LMG 5710 / NBRC 13948 / NRRL B-527 / VKM B-1787 / 2291 / W).